The sequence spans 132 residues: Replication enhancer protein (132 aa).

The protein belongs to the geminiviridae replication enhancer protein family. In terms of assembly, homooligomer. Interacts with the replication-associated protein (REP). Interacts with host proliferating cell nuclear antigen (PCNA). Interacts with host retinoblastoma-related protein 1 (RBR1), and may thereby deregulate the host cell cycle. Oligomerization and interaction with PCNA are necessary for optimal replication enhancement.

In terms of biological role, increases viral DNA accumulation. Enhances infectivity and symptom expression. In Macroptilium lathyroides (Lima bean), this protein is Replication enhancer protein.